The following is a 50-amino-acid chain: Fungus-induced protein 3 (50 aa).

The sequence is that of Fungus-induced protein 3 (fip-3) from Caenorhabditis elegans.